The following is a 346-amino-acid chain: Nicotinate-nucleotide--dimethylbenzimidazole phosphoribosyltransferase (346 aa).

Glu-312 functions as the Proton acceptor in the catalytic mechanism.

The protein belongs to the CobT family.

The enzyme catalyses 5,6-dimethylbenzimidazole + nicotinate beta-D-ribonucleotide = alpha-ribazole 5'-phosphate + nicotinate + H(+). Its pathway is nucleoside biosynthesis; alpha-ribazole biosynthesis; alpha-ribazole from 5,6-dimethylbenzimidazole: step 1/2. Its function is as follows. Catalyzes the synthesis of alpha-ribazole-5'-phosphate from nicotinate mononucleotide (NAMN) and 5,6-dimethylbenzimidazole (DMB). This chain is Nicotinate-nucleotide--dimethylbenzimidazole phosphoribosyltransferase, found in Cupriavidus taiwanensis (strain DSM 17343 / BCRC 17206 / CCUG 44338 / CIP 107171 / LMG 19424 / R1) (Ralstonia taiwanensis (strain LMG 19424)).